The following is a 65-amino-acid chain: Prokaryotic ubiquitin-like protein Pup (65 aa).

The tract at residues Met1 to Asp38 is disordered. The tract at residues Asp21–Tyr59 is ARC ATPase binding. Residues Ala22–Val34 are compositionally biased toward polar residues. Residue Gln65 is modified to Deamidated glutamine. Gln65 is covalently cross-linked (Isoglutamyl lysine isopeptide (Gln-Lys) (interchain with K-? in acceptor proteins)).

This sequence belongs to the prokaryotic ubiquitin-like protein family. In terms of assembly, strongly interacts with the proteasome-associated ATPase ARC through a hydrophobic interface; the interacting region of Pup lies in its C-terminal half. There is one Pup binding site per ARC hexamer ring. Is modified by deamidation of its C-terminal glutamine to glutamate by the deamidase Dop, a prerequisite to the subsequent pupylation process.

The protein operates within protein degradation; proteasomal Pup-dependent pathway. Protein modifier that is covalently attached to lysine residues of substrate proteins, thereby targeting them for proteasomal degradation. The tagging system is termed pupylation. The polypeptide is Prokaryotic ubiquitin-like protein Pup (Corynebacterium urealyticum (strain ATCC 43042 / DSM 7109)).